The following is a 169-amino-acid chain: ATP synthase subunit b (169 aa).

Residues 11 to 31 form a helical membrane-spanning segment; the sequence is KLPLGNMLFIIISFLVLMVIL.

This sequence belongs to the ATPase B chain family. As to quaternary structure, F-type ATPases have 2 components, F(1) - the catalytic core - and F(0) - the membrane proton channel. F(1) has five subunits: alpha(3), beta(3), gamma(1), delta(1), epsilon(1). F(0) has three main subunits: a(1), b(2) and c(10-14). The alpha and beta chains form an alternating ring which encloses part of the gamma chain. F(1) is attached to F(0) by a central stalk formed by the gamma and epsilon chains, while a peripheral stalk is formed by the delta and b chains.

Its subcellular location is the cell membrane. In terms of biological role, f(1)F(0) ATP synthase produces ATP from ADP in the presence of a proton or sodium gradient. F-type ATPases consist of two structural domains, F(1) containing the extramembraneous catalytic core and F(0) containing the membrane proton channel, linked together by a central stalk and a peripheral stalk. During catalysis, ATP synthesis in the catalytic domain of F(1) is coupled via a rotary mechanism of the central stalk subunits to proton translocation. Its function is as follows. Component of the F(0) channel, it forms part of the peripheral stalk, linking F(1) to F(0). This Leuconostoc citreum (strain KM20) protein is ATP synthase subunit b.